The following is a 130-amino-acid chain: Glycine cleavage system H protein (130 aa).

A Lipoyl-binding domain is found at 24–106 (TLTIGITDHA…YGEGWIMRIR (83 aa)). At Lys-65 the chain carries N6-lipoyllysine. The disordered stretch occupies residues 111–130 (DDLEQLLDPEDYQDLVADEE).

It belongs to the GcvH family. The glycine cleavage system is composed of four proteins: P, T, L and H. (R)-lipoate serves as cofactor.

Its function is as follows. The glycine cleavage system catalyzes the degradation of glycine. The H protein shuttles the methylamine group of glycine from the P protein to the T protein. The protein is Glycine cleavage system H protein of Alkalilimnicola ehrlichii (strain ATCC BAA-1101 / DSM 17681 / MLHE-1).